The primary structure comprises 185 residues: Large ribosomal subunit protein uL5 (185 aa).

Belongs to the universal ribosomal protein uL5 family. In terms of assembly, part of the 50S ribosomal subunit; part of the 5S rRNA/L5/L18/L25 subcomplex. Contacts the 5S rRNA and the P site tRNA. Forms a bridge to the 30S subunit in the 70S ribosome.

Functionally, this is one of the proteins that bind and probably mediate the attachment of the 5S RNA into the large ribosomal subunit, where it forms part of the central protuberance. In the 70S ribosome it contacts protein S13 of the 30S subunit (bridge B1b), connecting the 2 subunits; this bridge is implicated in subunit movement. Contacts the P site tRNA; the 5S rRNA and some of its associated proteins might help stabilize positioning of ribosome-bound tRNAs. The protein is Large ribosomal subunit protein uL5 of Brucella abortus (strain 2308).